The chain runs to 515 residues: Bifunctional purine biosynthesis protein PurH (515 aa).

The region spanning 1 to 145 (MTKRALISVS…KNHASVTVVV (145 aa)) is the MGS-like domain.

It belongs to the PurH family.

It catalyses the reaction (6R)-10-formyltetrahydrofolate + 5-amino-1-(5-phospho-beta-D-ribosyl)imidazole-4-carboxamide = 5-formamido-1-(5-phospho-D-ribosyl)imidazole-4-carboxamide + (6S)-5,6,7,8-tetrahydrofolate. The enzyme catalyses IMP + H2O = 5-formamido-1-(5-phospho-D-ribosyl)imidazole-4-carboxamide. The protein operates within purine metabolism; IMP biosynthesis via de novo pathway; 5-formamido-1-(5-phospho-D-ribosyl)imidazole-4-carboxamide from 5-amino-1-(5-phospho-D-ribosyl)imidazole-4-carboxamide (10-formyl THF route): step 1/1. It participates in purine metabolism; IMP biosynthesis via de novo pathway; IMP from 5-formamido-1-(5-phospho-D-ribosyl)imidazole-4-carboxamide: step 1/1. The protein is Bifunctional purine biosynthesis protein PurH of Streptococcus equi subsp. zooepidemicus (strain H70).